The sequence spans 628 residues: Hemocyanin II (628 aa).

Threonine 1 is subject to Blocked amino end (Thr); partial. Cu cation-binding residues include histidine 173, histidine 177, histidine 204, histidine 324, histidine 328, and histidine 364. Asparagine 449 is a glycosylation site (N-linked (GlcNAc...) asparagine). 2 disulfide bridges follow: cysteine 534–cysteine 576 and cysteine 536–cysteine 583.

This sequence belongs to the tyrosinase family. Hemocyanin subfamily. In terms of assembly, hexamer or a multiple thereof. Hemolymph.

Its subcellular location is the secreted. It is found in the extracellular space. Hemocyanins are copper-containing oxygen carriers occurring freely dissolved in the hemolymph of many mollusks and arthropods. The protein is Hemocyanin II of Limulus polyphemus (Atlantic horseshoe crab).